Here is a 344-residue protein sequence, read N- to C-terminus: Calcium homeostasis modulator protein 3 (344 aa).

Over 1 to 20 (MDKFRMLFQHFQSSSESVMN) the chain is Cytoplasmic. The central pore stretch occupies residues 9 to 36 (QHFQSSSESVMNGICLLLAAVTVKLYSS). A helical membrane pass occupies residues 21–36 (GICLLLAAVTVKLYSS). The Extracellular portion of the chain corresponds to 37 to 48 (FDFNCPCLVHYN). Cystine bridges form between cysteine 41–cysteine 126 and cysteine 43–cysteine 157. A helical membrane pass occupies residues 49-71 (ALYGLGLLLTPPLALFLCGLLAN). The Cytoplasmic portion of the chain corresponds to 72–98 (RQSVVMVEEWRRPAGHRRKDPGIIRYM). A lipid anchor (S-palmitoyl cysteine) is attached at cysteine 99. Residues 99–124 (CSSVLQRALAAPLVWILLALLDGKCF) traverse the membrane as a helical segment. Over 125–176 (VCAFSSSVDPEKFLDFANMTPSQVQLFLAKVPCKEDELVRDSPARKAVSRYL) the chain is Extracellular. Residue asparagine 142 is glycosylated (N-linked (GlcNAc...) asparagine). Residues 177 to 202 (RCLSQAIGWSVTLLLIIAAFLARCLR) form a helical membrane-spanning segment. Residues cysteine 200 and cysteine 204 are each lipidated (S-palmitoyl cysteine). At 203–344 (PCFDQTVFLQ…GTRLSQHTDV (142 aa)) the chain is on the cytoplasmic side.

Belongs to the CALHM family. As to quaternary structure, associates with CALHM1 as a pore-forming subunit in a hetero-hexameric channel complex. Post-translationally, N-glycosylated. In terms of processing, palmitoylated by ZDHHC3 and ZDHHC15. Palmitoylation positively regulates CALHM1:CALHM3 channel conductance. As to expression, specifically expressed in circumvallate taste bud cells.

The protein localises to the basolateral cell membrane. The enzyme catalyses ATP(in) = ATP(out). It carries out the reaction Ca(2+)(in) = Ca(2+)(out). It catalyses the reaction Na(+)(in) = Na(+)(out). The catalysed reaction is K(+)(in) = K(+)(out). The enzyme catalyses chloride(in) = chloride(out). Functionally, pore-forming subunit of gustatory voltage-gated ion channels required for sensory perception of sweet, bitter and umami tastes. With CALHM1 forms a fast-activating voltage-gated ATP-release channel in type II taste bud cells, ATP acting as a neurotransmitter to activate afferent neural gustatory pathways. Acts both as a voltage-gated and calcium-activated ion channel: mediates neuronal excitability in response to membrane depolarization and low extracellular Ca(2+) concentration. Has poor ion selectivity and forms a wide pore (around 14 Angstroms) that mediates permeation of small ions including Ca(2+), Na(+), K(+) and Cl(-), as well as larger ions such as ATP(4-). This Homo sapiens (Human) protein is Calcium homeostasis modulator protein 3.